Consider the following 316-residue polypeptide: tRNA pseudouridine synthase B (316 aa).

Catalysis depends on Asp-47, which acts as the Nucleophile.

Belongs to the pseudouridine synthase TruB family. Type 1 subfamily.

It carries out the reaction uridine(55) in tRNA = pseudouridine(55) in tRNA. In terms of biological role, responsible for synthesis of pseudouridine from uracil-55 in the psi GC loop of transfer RNAs. This chain is tRNA pseudouridine synthase B, found in Photobacterium profundum (strain SS9).